Consider the following 684-residue polypeptide: Protein ecdysoneless (684 aa).

Positions 491 to 501 are enriched in acidic residues; that stretch reads EPELDSDDDEP. 2 disordered regions span residues 491-528 and 603-624; these read EPELDSDDDEPPPQANGSTGLTAKVKKNPSMRKACQRN and TSVGKSFHGKKKTAPQADEDDF.

This sequence belongs to the ECD family. In terms of tissue distribution, expressed in the ecdysone-producing larval ring gland, nervous system, imaginal disks and gonads.

The protein localises to the cytoplasm. In terms of biological role, required in both the follicle cells and the germline for oocyte development. In Drosophila melanogaster (Fruit fly), this protein is Protein ecdysoneless.